Consider the following 197-residue polypeptide: MDVGSKEVLMESPPDYSAAPRGRFGIPCCPVHLKRLLIVVVVVVLIVVVIVGALLMGLHMSQKHTEMVLEMSIGAPEAQQRLALSEHLVTTATFSIGSTGLVVYDYQQLLIAYKPAPGTCCYIMKIAPESIPSLEALTRKVHNFQMECSLQAKPAVPTSKLGQAEGRDAGSAPSGGDPAFLGMAVSTLCGEVPLYYI.

Residues 1–23 (MDVGSKEVLMESPPDYSAAPRGR) constitute a propeptide that is removed on maturation. S-palmitoyl cysteine attachment occurs at residues Cys28 and Cys29. A propeptide spanning residues 59 to 197 (HMSQKHTEMV…LCGEVPLYYI (139 aa)) is cleaved from the precursor. Positions 94 to 197 (FSIGSTGLVV…LCGEVPLYYI (104 aa)) constitute a BRICHOS domain. 2 disulfide bridges follow: Cys120/Cys148 and Cys121/Cys189.

Its subcellular location is the secreted. The protein localises to the extracellular space. It is found in the surface film. In terms of biological role, pulmonary surfactant associated proteins promote alveolar stability by lowering the surface tension at the air-liquid interface in the peripheral air spaces. In Homo sapiens (Human), this protein is Surfactant protein C.